Consider the following 906-residue polypeptide: Probable disease resistance RPP8-like protein 2 (906 aa).

Positions 15 to 68 form a coiled coil; sequence ELLSRESARLNGIDEQVDGLKRQLGRLQSLLKDADAKKNETERVRNFLEDVKDI. In terms of domain architecture, NB-ARC spans 144-454; sequence LQERQREIRQ…AEGIITPFHD (311 aa). ATP is bound at residue 190–197; it reads GMGGIGKT. LRR repeat units follow at residues 573 to 597, 598 to 621, 623 to 644, 646 to 671, 672 to 696, 704 to 727, 740 to 766, 767 to 790, 791 to 818, and 840 to 865; these read LPLL…SIGD, LIHL…LGNL, LLLC…NVLK, MQEL…DLVN, LESL…KLSV, ECTF…SFHD, LLVL…QYRF, PPHL…ILEK, LLHL…GFPQ, and MPCL…KYVT.

This sequence belongs to the disease resistance NB-LRR family. RPP8/HRT subfamily.

Functionally, potential disease resistance protein. This Arabidopsis thaliana (Mouse-ear cress) protein is Probable disease resistance RPP8-like protein 2 (RPP8L2).